We begin with the raw amino-acid sequence, 79 residues long: Conotoxin Leo-O4 (79 aa).

The signal sequence occupies residues 1-22 (MKLTCMMLVAVLFLTAWTFVTA). The propeptide occupies 23–51 (NVSRNGLENLFPEERHEMMNPNAAKLNNR). Disulfide bonds link cysteine 53/cysteine 70, cysteine 60/cysteine 74, and cysteine 69/cysteine 78.

It belongs to the conotoxin O1 superfamily. As to expression, expressed by the venom duct.

It is found in the secreted. This chain is Conotoxin Leo-O4, found in Conus leopardus (Leopard cone).